The primary structure comprises 249 residues: Geranylgeranylglyceryl phosphate synthase (249 aa).

Mg(2+) is bound by residues Asp20 and Ser49. Residues 169 to 175 (YLDAGSG), 200 to 201 (GG), and 222 to 223 (GN) contribute to the sn-glycerol 1-phosphate site.

The protein belongs to the GGGP/HepGP synthase family. Group II subfamily. Homohexamer. Mg(2+) is required as a cofactor.

It carries out the reaction sn-glycerol 1-phosphate + (2E,6E,10E)-geranylgeranyl diphosphate = sn-3-O-(geranylgeranyl)glycerol 1-phosphate + diphosphate. In terms of biological role, prenyltransferase that catalyzes the transfer of the geranylgeranyl moiety of geranylgeranyl diphosphate (GGPP) to the C3 hydroxyl of sn-glycerol-1-phosphate (G1P). The protein is Geranylgeranylglyceryl phosphate synthase of Spirosoma linguale (strain ATCC 33905 / DSM 74 / LMG 10896 / Claus 1).